The chain runs to 291 residues: 3-hydroxy-5-phosphonooxypentane-2,4-dione thiolase (291 aa).

The active-site Schiff-base intermediate with substrate is Lys-203.

Belongs to the DeoC/FbaB aldolase family. Homodecamer.

The protein resides in the cytoplasm. The catalysed reaction is dihydroxyacetone phosphate + acetyl-CoA = 3-hydroxy-2,4-dioxopentyl phosphate + CoA. In terms of biological role, involved in the degradation of phospho-AI-2, thereby terminating induction of the lsr operon and closing the AI-2 signaling cycle. Catalyzes the transfer of an acetyl moiety from 3-hydroxy-5-phosphonooxypentane-2,4-dione to CoA to form glycerone phosphate and acetyl-CoA. The chain is 3-hydroxy-5-phosphonooxypentane-2,4-dione thiolase from Yersinia pseudotuberculosis serotype O:1b (strain IP 31758).